The chain runs to 59 residues: Large ribosomal subunit protein uL30 (59 aa).

Belongs to the universal ribosomal protein uL30 family. As to quaternary structure, part of the 50S ribosomal subunit.

In Pectobacterium atrosepticum (strain SCRI 1043 / ATCC BAA-672) (Erwinia carotovora subsp. atroseptica), this protein is Large ribosomal subunit protein uL30.